Reading from the N-terminus, the 64-residue chain is Disintegrin CV-11-beta (64 aa).

The Disintegrin domain maps to 1–64 (NSAHPCCDPV…SDCPRNPWKD (64 aa)). Disulfide bonds link Cys6-Cys29, Cys20-Cys26, Cys25-Cys50, and Cys38-Cys57. Positions 42-44 (RGD) match the Cell attachment site motif.

It belongs to the disintegrin family. Dimeric disintegrin subfamily. Heterodimer with subunit alpha; disulfide-linked. Expressed by the venom gland.

Its subcellular location is the secreted. Inhibits ADP-induced human platelet aggregation. Antagonist of alpha-IIb/beta-3 (ITGA2B/ITGB3). The chain is Disintegrin CV-11-beta from Cerastes vipera (Sahara sand viper).